The chain runs to 666 residues: MSELNPVDNQKVDSINVDKSSPELKKHTFEAEVAQLLHLVTHSLYSNSDIFVRELVSNASDACDKLRFEATNDDSLYEDDGELKIRIAVDEDAKTITFTDNGIGMNEADAIENLGTIAKSGTKAFLDKLSESQKQDGQLIGQFGVGFYSGFIVADTISVETRKAGEPADKGVRWVSDGTGSFTVEPITKETRGTAITLHLKEQYSEGEESYLDRGKIKQLVNKYSDHISLPIQMRKEVWQEDEVEEGSDTPANGQMVLTDEWETINKASALWTRSASEIEDEEYIDFYKNITYDMDAPLAWTHNRVEGRVQYTQLLYIPKKAPVDLYTREQQHGLKLYVKRVFIMDEAEQLLPMYLRFVKGVIDSADLPLNVSRELLQESRDVKSIRDGNARRILTLLASLANSEDSDKQEKFAQFYAEFGDVIKEGVGEDMGNQERIAKLLRYATSTQDSVTTSFEDYKARMKEGQKAIYYLTADNLAAAKNSPQLELFKKKGIEVILMTSRVDEWAMNFLTSFDETPLQNIAKGAVDLGDLQDEAEKAEAEKAQETMKPIVDKLKTALGERAKDVKVSTRLVDSPACLVVGEGELSPQMIQMLKQMGQDVPESKPTLEVNPDHPLIKKLESSEQSAEDFDKLAQVIFDQALLADGGQLDDPAAYLRRVNELLMR.

An a; substrate-binding region spans residues 1–374 (MSELNPVDNQ…SADLPLNVSR (374 aa)). Positions 375 to 593 (ELLQESRDVK…EGELSPQMIQ (219 aa)) are b. The segment at 594–666 (MLKQMGQDVP…LRRVNELLMR (73 aa)) is c.

Belongs to the heat shock protein 90 family. As to quaternary structure, homodimer.

It localises to the cytoplasm. Functionally, molecular chaperone. Has ATPase activity. The chain is Chaperone protein HtpG from Psychrobacter cryohalolentis (strain ATCC BAA-1226 / DSM 17306 / VKM B-2378 / K5).